The following is a 129-amino-acid chain: uncharacterized protein (129 aa).

Residues 91-114 (ASEKVGEMKEAASEKASEMKEAVS) are compositionally biased toward basic and acidic residues. Residues 91–129 (ASEKVGEMKEAASEKASEMKEAVSEKATQAVDAVKEATK) form a disordered region.

It belongs to the LEA type 1 family.

This is an uncharacterized protein from Haemophilus influenzae (strain ATCC 51907 / DSM 11121 / KW20 / Rd).